We begin with the raw amino-acid sequence, 139 residues long: ATP synthase epsilon chain (139 aa).

This sequence belongs to the ATPase epsilon chain family. In terms of assembly, F-type ATPases have 2 components, CF(1) - the catalytic core - and CF(0) - the membrane proton channel. CF(1) has five subunits: alpha(3), beta(3), gamma(1), delta(1), epsilon(1). CF(0) has three main subunits: a, b and c.

It localises to the cell inner membrane. In terms of biological role, produces ATP from ADP in the presence of a proton gradient across the membrane. The polypeptide is ATP synthase epsilon chain (Alcanivorax borkumensis (strain ATCC 700651 / DSM 11573 / NCIMB 13689 / SK2)).